The chain runs to 357 residues: MGGAVSAGEDNDDLIDNLKEAQYIRTERVEQAFRAIDRGDYYLEGYRDNAYKDLAWKHGNIHLSAPCIYSEVMEALKLQPGLSFLNLGSGTGYLSTMVGLILGPFGINHGIELHSDVVEYAKEKLESFIKNSDSFDKFEFCEPAFVVGNCLQIASDSHQYDRIYCGAGVQKDHENYMKILLKVGGILVMPIEDQLTQIMRTGQNTWESKNILAVSFAPLVQPSKNDNGTPDSVGLPPCAVRNLQDLARIYIRRTLRNFINDEMQAKGIPQRAPPKRKRKRVKQRINTYVFVGNQLIPQPLDSEEDEKMEEDSKEEEEKEHIEAMKREEPPQNLLREKIMKLPLPESLKAYLTYFRDK.

Residue Gly-2 is the site of N-myristoyl glycine attachment. The active site involves Ser-64. AdoMet binding motif regions lie at residues 85-94 (LNLGSGTGYL), 160-164 (YDRIY), and 181-191 (LKVGGILVMPI). Residues 240-250 (VRNLQDLARIY) are BC-box. Residues 299–331 (PLDSEEDEKMEEDSKEEEEKEHIEAMKREEPPQ) are disordered. The span at 301–317 (DSEEDEKMEEDSKEEEE) shows a compositional bias: acidic residues. The segment covering 318-331 (KEHIEAMKREEPPQ) has biased composition (basic and acidic residues). The tract at residues 341 to 344 (LPLP) is CUL-box.

This sequence belongs to the methyltransferase superfamily. L-isoaspartyl/D-aspartyl protein methyltransferase family. Component of the probable ECS(PCMTD1) E3 ubiquitin-protein ligase complex, at least composed of CUL5, ELOB, ELOC, RBX2 and PCMTD1. Interacts (via the BC-box) with ELOB and ELOC; the interaction is direct and stabilizes PCMTD1.

Its subcellular location is the cytoplasm. It is found in the membrane. Substrate recognition component of an ECS (Elongin BC-CUL5-SOCS-box protein) E3 ubiquitin ligase complex which mediates the ubiquitination and subsequent proteasomal degradation of target proteins. Specifically binds to the methyltransferase cofactor S-adenosylmethionine (AdoMet) via the N-terminal AdoMet binding motif, but does not display methyltransferase activity. May provide an alternate maintenance pathway for modified proteins by acting as a damage-specific E3 ubiquitin ligase adaptor protein. In Mus musculus (Mouse), this protein is Protein-L-isoaspartate O-methyltransferase domain-containing protein 1 (Pcmtd1).